The chain runs to 493 residues: Monocarboxylate transporter 1 (493 aa).

The Cytoplasmic segment spans residues M1–V22. A helical transmembrane segment spans residues L23–F44. Position 38 (K38) interacts with (S)-lactate. Over K45 to T55 the chain is Extracellular. Residues S56 to V80 form a helical membrane-spanning segment. Residues N81–G84 are Cytoplasmic-facing. The chain crosses the membrane as a helical span at residues S85 to F105. Residues C106–V109 lie on the Extracellular side of the membrane. A helical transmembrane segment spans residues Q110–L132. At T133–A146 the chain is on the cytoplasmic side. Residues N147–F169 traverse the membrane as a helical segment. Residues D170–W174 are Extracellular-facing. Residues R175–L194 traverse the membrane as a helical segment. Residues M195 to R254 lie on the Cytoplasmic side of the membrane. S210, S213, and S220 each carry phosphoserine. At T224 the chain carries Phosphothreonine. S230 carries the post-translational modification Phosphoserine. Residues G255 to G281 form a helical membrane-spanning segment. Residues K282–S288 are Extracellular-facing. The helical transmembrane segment at E289–G310 threads the bilayer. D302 serves as a coordination point for H(+). R306 is a (S)-lactate binding site. The Cytoplasmic segment spans residues L311–R321. Residues I322–L342 traverse the membrane as a helical segment. At S343–Y346 the chain is on the extracellular side. The chain crosses the membrane as a helical span at residues V347–F368. Residues E369–S382 lie on the Cytoplasmic side of the membrane. The chain crosses the membrane as a helical span at residues A383 to G403. Residues R404 to Y414 are Extracellular-facing. Residues T415–I436 traverse the membrane as a helical segment. Residues N437 to V493 are Cytoplasmic-facing. Residues A447–M472 are compositionally biased toward basic and acidic residues. The interval A447–V493 is disordered. The residue at position 461 (S461) is a Phosphoserine. T462 carries the post-translational modification Phosphothreonine. A compositionally biased stretch (polar residues) spans A474–D485. S477, S482, S483, and S491 each carry phosphoserine.

Belongs to the major facilitator superfamily. Monocarboxylate porter (TC 2.A.1.13) family. As to quaternary structure, interacts with isoform 2 of BSG; interaction mediates SLC16A1 targeting to the plasma membrane. Interacts with EMB; interaction mediates SLC16A1 targeting to the plasma membrane. As to expression, detected in liver, brain, spinal cord, spermatozoa, muscle, white adipose tissue and brown adipose tissue (at protein level). Widely expressed, except in pancreas, where expression is not detectable.

It is found in the cell membrane. It localises to the basolateral cell membrane. The protein localises to the apical cell membrane. It carries out the reaction (S)-lactate(in) + H(+)(in) = (S)-lactate(out) + H(+)(out). The enzyme catalyses acetate(out) + H(+)(out) = acetate(in) + H(+)(in). It catalyses the reaction acetoacetate(out) + H(+)(out) = acetoacetate(in) + H(+)(in). The catalysed reaction is pyruvate(out) + H(+)(out) = pyruvate(in) + H(+)(in). It carries out the reaction (R)-3-hydroxybutanoate(out) + H(+)(out) = (R)-3-hydroxybutanoate(in) + H(+)(in). The enzyme catalyses 3-methyl-2-oxobutanoate(out) + H(+)(out) = 3-methyl-2-oxobutanoate(in) + H(+)(in). It catalyses the reaction 4-methyl-2-oxopentanoate(out) + H(+)(out) = 4-methyl-2-oxopentanoate(in) + H(+)(in). The catalysed reaction is succinate(in) + 2 H(+)(in) = succinate(out) + 2 H(+)(out). Functionally, bidirectional proton-coupled monocarboxylate transporter. Catalyzes the rapid transport across the plasma membrane of many monocarboxylates such as lactate, pyruvate, acetate and the ketone bodies acetoacetate and beta-hydroxybutyrate, and thus contributes to the maintenance of intracellular pH. The transport direction is determined by the proton motive force and the concentration gradient of the substrate monocarboxylate. MCT1 is a major lactate exporter. Plays a role in cellular responses to a high-fat diet by modulating the cellular levels of lactate and pyruvate that contribute to the regulation of central metabolic pathways and insulin secretion, with concomitant effects on plasma insulin levels and blood glucose homeostasis. Facilitates the protonated monocarboxylate form of succinate export, that its transient protonation upon muscle cell acidification in exercising muscle and ischemic heart. Functions via alternate outward- and inward-open conformation states. Protonation and deprotonation of 302-Asp is essential for the conformational transition. The polypeptide is Monocarboxylate transporter 1 (Slc16a1) (Mus musculus (Mouse)).